A 435-amino-acid chain; its full sequence is Eukaryotic translation initiation factor 3 subunit E (435 aa).

The region spanning 219 to 392 (FFNHPKGRDL…GHVVMGTQPL (174 aa)) is the PCI domain.

The protein belongs to the eIF-3 subunit E family. As to quaternary structure, component of the eukaryotic translation initiation factor 3 (eIF-3) complex. The eIF-3 complex interacts with pix. Interacts with mxt. As to expression, expression levels in females and males are relatively similar 10 days after oviposition, however by day 15 expression is higher in gravid females than in males (at protein level).

The protein resides in the cytoplasm. It localises to the microsome. It is found in the endoplasmic reticulum. Functionally, component of the eukaryotic translation initiation factor 3 (eIF-3) complex, which is involved in protein synthesis of a specialized repertoire of mRNAs and, together with other initiation factors, stimulates binding of mRNA and methionyl-tRNAi to the 40S ribosome. The eIF-3 complex specifically targets and initiates translation of a subset of mRNAs involved in cell proliferation. In addition to its role in the eIF-3 complex, also functions in protein ubiquitination and degradation. During mitosis required for regulating mitotic microtubule growth and kinetochore formation, and consequently is required for satisfying the spindle assembly checkpoint (SAC) during metaphase to prevent delays in mitotic progression. This is likely by promoting the ubiquitination and degradation of Klp67A, a kinesin-like protein that suppresses microtubule polymerization at plus ends. Acts in the COP9 signalosome (CSN) mediated regulation of cullin neddylation by promoting Cul1 and Cul3 neddylation and negatively regulating the CSN complex subunit CSN5. The sequence is that of Eukaryotic translation initiation factor 3 subunit E from Drosophila melanogaster (Fruit fly).